The sequence spans 232 residues: Large ribosomal subunit protein uL1 (232 aa).

This sequence belongs to the universal ribosomal protein uL1 family. In terms of assembly, part of the 50S ribosomal subunit.

Binds directly to 23S rRNA. The L1 stalk is quite mobile in the ribosome, and is involved in E site tRNA release. Functionally, protein L1 is also a translational repressor protein, it controls the translation of the L11 operon by binding to its mRNA. The sequence is that of Large ribosomal subunit protein uL1 from Dinoroseobacter shibae (strain DSM 16493 / NCIMB 14021 / DFL 12).